The following is a 209-amino-acid chain: Large ribosomal subunit protein uL3 (209 aa).

Belongs to the universal ribosomal protein uL3 family. Part of the 50S ribosomal subunit. Forms a cluster with proteins L14 and L19.

In terms of biological role, one of the primary rRNA binding proteins, it binds directly near the 3'-end of the 23S rRNA, where it nucleates assembly of the 50S subunit. In Clostridium botulinum (strain Okra / Type B1), this protein is Large ribosomal subunit protein uL3.